Consider the following 692-residue polypeptide: Elongation factor G (692 aa).

One can recognise a tr-type G domain in the interval 8–283 (KNTRNIGIMA…AVLDYLPSPV (276 aa)). GTP-binding positions include 17 to 24 (AHIDAGKT), 81 to 85 (DTPGH), and 135 to 138 (NKMD).

Belongs to the TRAFAC class translation factor GTPase superfamily. Classic translation factor GTPase family. EF-G/EF-2 subfamily.

It localises to the cytoplasm. Its function is as follows. Catalyzes the GTP-dependent ribosomal translocation step during translation elongation. During this step, the ribosome changes from the pre-translocational (PRE) to the post-translocational (POST) state as the newly formed A-site-bound peptidyl-tRNA and P-site-bound deacylated tRNA move to the P and E sites, respectively. Catalyzes the coordinated movement of the two tRNA molecules, the mRNA and conformational changes in the ribosome. The protein is Elongation factor G of Exiguobacterium sibiricum (strain DSM 17290 / CCUG 55495 / CIP 109462 / JCM 13490 / 255-15).